The following is a 938-amino-acid chain: Chaperone protein ClpD1, chloroplastic (938 aa).

The transit peptide at 1–83 (MEVCCCSTSS…FERFTERAVK (83 aa)) directs the protein to the chloroplast. Repeat stretches follow at residues 84–145 (AVVL…TPGA) and 159–224 (FSGS…LQAE). The region spanning 84 to 224 (AVVLSQREAK…SVALTRLQAE (141 aa)) is the Clp R domain. The tract at residues 234-255 (GASSFKVPKKSPAGAGRSAFSK) is disordered. Positions 266–519 (LDQFCLDLTT…RMESFNRKKE (254 aa)) are i. ATP contacts are provided by residues 311 to 318 (GEAGVGKT) and 660 to 667 (GPTGVGKT). Residues 586 to 777 (VGTEEIARVA…LIVMTSNIGS (192 aa)) form an II region.

The protein belongs to the ClpA/ClpB family. ClpD subfamily. Expressed in stems, culms and leaves.

It is found in the plastid. It localises to the chloroplast. In terms of biological role, molecular chaperone that may function in heat stress response. May interact with a ClpP-like protease involved in degradation of denatured proteins in the chloroplast. Chaperone involved in response to abiotic stresses. Plays a positive role during dehydration and salt stress. The protein is Chaperone protein ClpD1, chloroplastic of Oryza sativa subsp. japonica (Rice).